The sequence spans 41 residues: Giant hemoglobin AI chain (41 aa).

A Globin domain is found at 2-41 (DCGMLQRIKVKQQWASVYSSGIAREDFGEAIWKAVFALAP).

The protein belongs to the globin family. As to quaternary structure, giant hemoglobin is composed of four heme-containing chains (AI to AIV), and two linker chains (AV and AVI).

This chain is Giant hemoglobin AI chain, found in Lamellibrachia sp. (Deep-sea giant tube worm).